The following is an 87-amino-acid chain: Small ribosomal subunit protein uS19 (87 aa).

It belongs to the universal ribosomal protein uS19 family.

In terms of biological role, protein S19 forms a complex with S13 that binds strongly to the 16S ribosomal RNA. The polypeptide is Small ribosomal subunit protein uS19 (Mesoplasma florum (strain ATCC 33453 / NBRC 100688 / NCTC 11704 / L1) (Acholeplasma florum)).